Here is a 348-residue protein sequence, read N- to C-terminus: Holliday junction branch migration complex subunit RuvB (348 aa).

The interval 1 to 20 (MKPPARMVSPERRSDDVGDT) is disordered. A large ATPase domain (RuvB-L) region spans residues 1–183 (MKPPARMVSP…FGIPIRLNFY (183 aa)). ATP contacts are provided by residues leucine 22, arginine 23, glycine 64, lysine 67, threonine 68, threonine 69, 130 to 132 (EDF), arginine 173, tyrosine 183, and arginine 220. Threonine 68 is a binding site for Mg(2+). Residues 184-254 (TVEELEGIVT…IADHALSALE (71 aa)) form a small ATPAse domain (RuvB-S) region. Residues 257–348 (AAGLDAMDRR…FGLFGSEDDA (92 aa)) are head domain (RuvB-H). Arginine 293, arginine 312, and arginine 317 together coordinate DNA.

This sequence belongs to the RuvB family. Homohexamer. Forms an RuvA(8)-RuvB(12)-Holliday junction (HJ) complex. HJ DNA is sandwiched between 2 RuvA tetramers; dsDNA enters through RuvA and exits via RuvB. An RuvB hexamer assembles on each DNA strand where it exits the tetramer. Each RuvB hexamer is contacted by two RuvA subunits (via domain III) on 2 adjacent RuvB subunits; this complex drives branch migration. In the full resolvosome a probable DNA-RuvA(4)-RuvB(12)-RuvC(2) complex forms which resolves the HJ.

Its subcellular location is the cytoplasm. The catalysed reaction is ATP + H2O = ADP + phosphate + H(+). The RuvA-RuvB-RuvC complex processes Holliday junction (HJ) DNA during genetic recombination and DNA repair, while the RuvA-RuvB complex plays an important role in the rescue of blocked DNA replication forks via replication fork reversal (RFR). RuvA specifically binds to HJ cruciform DNA, conferring on it an open structure. The RuvB hexamer acts as an ATP-dependent pump, pulling dsDNA into and through the RuvAB complex. RuvB forms 2 homohexamers on either side of HJ DNA bound by 1 or 2 RuvA tetramers; 4 subunits per hexamer contact DNA at a time. Coordinated motions by a converter formed by DNA-disengaged RuvB subunits stimulates ATP hydrolysis and nucleotide exchange. Immobilization of the converter enables RuvB to convert the ATP-contained energy into a lever motion, pulling 2 nucleotides of DNA out of the RuvA tetramer per ATP hydrolyzed, thus driving DNA branch migration. The RuvB motors rotate together with the DNA substrate, which together with the progressing nucleotide cycle form the mechanistic basis for DNA recombination by continuous HJ branch migration. Branch migration allows RuvC to scan DNA until it finds its consensus sequence, where it cleaves and resolves cruciform DNA. The polypeptide is Holliday junction branch migration complex subunit RuvB (Bradyrhizobium sp. (strain BTAi1 / ATCC BAA-1182)).